The following is a 215-amino-acid chain: 3-isopropylmalate dehydratase small subunit (215 aa).

It belongs to the LeuD family. LeuD type 1 subfamily. In terms of assembly, heterodimer of LeuC and LeuD.

The enzyme catalyses (2R,3S)-3-isopropylmalate = (2S)-2-isopropylmalate. Its pathway is amino-acid biosynthesis; L-leucine biosynthesis; L-leucine from 3-methyl-2-oxobutanoate: step 2/4. Catalyzes the isomerization between 2-isopropylmalate and 3-isopropylmalate, via the formation of 2-isopropylmaleate. This is 3-isopropylmalate dehydratase small subunit from Hahella chejuensis (strain KCTC 2396).